Reading from the N-terminus, the 139-residue chain is Translation initiation factor 2 subunit beta (139 aa).

The protein belongs to the eIF-2-beta/eIF-5 family. In terms of assembly, heterotrimer composed of an alpha, a beta and a gamma chain.

EIF-2 functions in the early steps of protein synthesis by forming a ternary complex with GTP and initiator tRNA. The polypeptide is Translation initiation factor 2 subunit beta (Sulfurisphaera tokodaii (strain DSM 16993 / JCM 10545 / NBRC 100140 / 7) (Sulfolobus tokodaii)).